A 131-amino-acid polypeptide reads, in one-letter code: Urease subunit beta (131 aa).

A disordered region spans residues proline 100–alanine 131.

The protein belongs to the urease beta subunit family. In terms of assembly, heterotrimer of UreA (gamma), UreB (beta) and UreC (alpha) subunits. Three heterotrimers associate to form the active enzyme.

The protein localises to the cytoplasm. It carries out the reaction urea + 2 H2O + H(+) = hydrogencarbonate + 2 NH4(+). The protein operates within nitrogen metabolism; urea degradation; CO(2) and NH(3) from urea (urease route): step 1/1. The polypeptide is Urease subunit beta (Kocuria rhizophila (strain ATCC 9341 / DSM 348 / NBRC 103217 / DC2201)).